Here is a 197-residue protein sequence, read N- to C-terminus: Histone chaperone asf1b-A (197 aa).

It belongs to the ASF1 family. As to quaternary structure, interacts with histone H3 and histone H4.

The protein resides in the nucleus. Histone chaperone that facilitates histone deposition and histone exchange and removal during nucleosome assembly and disassembly. This chain is Histone chaperone asf1b-A (asf1ba), found in Danio rerio (Zebrafish).